The primary structure comprises 214 residues: MITLALSKGRIFEETLPLLAAAGIEVTEDPEKSRKLILPTNRADMQVVMVRATDVPTYVQYGGADLGVAGKDILIEHGGEGLYQPIDLRIARCRMSVATRADFDYDSAVKKGSRIRVATKYTAIARQHFADKGVHVDLIKLYGSMELAPLTGLADAIVDLVSTGSTLKANHLREVEPFMEISSRLVVNQAALKLKRERLRPLIDAIAAAVAARG.

It belongs to the ATP phosphoribosyltransferase family. Short subfamily. In terms of assembly, heteromultimer composed of HisG and HisZ subunits.

The protein localises to the cytoplasm. It catalyses the reaction 1-(5-phospho-beta-D-ribosyl)-ATP + diphosphate = 5-phospho-alpha-D-ribose 1-diphosphate + ATP. It participates in amino-acid biosynthesis; L-histidine biosynthesis; L-histidine from 5-phospho-alpha-D-ribose 1-diphosphate: step 1/9. Functionally, catalyzes the condensation of ATP and 5-phosphoribose 1-diphosphate to form N'-(5'-phosphoribosyl)-ATP (PR-ATP). Has a crucial role in the pathway because the rate of histidine biosynthesis seems to be controlled primarily by regulation of HisG enzymatic activity. The sequence is that of ATP phosphoribosyltransferase from Leptothrix cholodnii (strain ATCC 51168 / LMG 8142 / SP-6) (Leptothrix discophora (strain SP-6)).